A 65-amino-acid chain; its full sequence is Large ribosomal subunit protein bL35 (65 aa).

Positions M1–Q15 are enriched in basic residues. Residues M1–A27 form a disordered region.

It belongs to the bacterial ribosomal protein bL35 family.

The sequence is that of Large ribosomal subunit protein bL35 from Bordetella petrii (strain ATCC BAA-461 / DSM 12804 / CCUG 43448).